Consider the following 286-residue polypeptide: Short-chain dehydrogenase fogD (286 aa).

Residues Val8, Thr34, Asp55, Tyr147, Lys151, Val180, and Thr182 each coordinate NADP(+). Catalysis depends on Tyr147, which acts as the Proton acceptor. Lys151 serves as the catalytic Lowers pKa of active site Tyr.

The protein belongs to the short-chain dehydrogenases/reductases (SDR) family.

The protein operates within secondary metabolite biosynthesis. Its function is as follows. Short-chain dehydrogenase; part of the gene cluster that mediates the biosynthesis of flavoglaucin and congeners (including aspergin, dihydroauroglaucin and auroglaucin), prenylated salicylaldehyde derivatives carrying a saturated or an unsaturated C-7 side chain. The PKS fogA releases the carboxylic acid (8E,10E,12E)-3,5,7-trihydroxytetradeca-8,10,12-trienoic acid as its product, as well as derivatives with one and two double bonds. FogA is indeed able to reduce the initial triketide, thus being at least partially responsible for the differently saturated heptyl side chains of flavoglaucin congeners. The oxidoreductases fogB, fogC and fogD modify the nascent polyketide in fogA-bound form and, together, fogA, fogB, fogC and fogD are necessary for the formation of the aromatic core and the cyclized PKS products are released as salicyl alcohols. In particular, fogB is responsible for oxidation of a hydroxyl group or reduction of remaining double bond(s) at the C-7 residue whereas fogD is probably involved in the reductive release of the modified PKS products. The cytochrome P450 monooxygenase fogE is then responsible for the hydroxylation at C-3 of the benzene ring. The fogE products are substrates of the prenyltransferase fogH and the prenylated benzyl alcohols are subsequently oxidized by the fogF to produce the final aryl aldehydes flavoglaucin and congeners. The short-chain dehydrogenase fogG does not seem to be involved in the biosynthesis of the prenylated salicylaldehyde derivatives. The chain is Short-chain dehydrogenase fogD from Aspergillus ruber (strain CBS 135680).